The following is a 102-amino-acid chain: Aspartyl/glutamyl-tRNA(Asn/Gln) amidotransferase subunit C (102 aa).

Belongs to the GatC family. Heterotrimer of A, B and C subunits.

It catalyses the reaction L-glutamyl-tRNA(Gln) + L-glutamine + ATP + H2O = L-glutaminyl-tRNA(Gln) + L-glutamate + ADP + phosphate + H(+). It carries out the reaction L-aspartyl-tRNA(Asn) + L-glutamine + ATP + H2O = L-asparaginyl-tRNA(Asn) + L-glutamate + ADP + phosphate + 2 H(+). In terms of biological role, allows the formation of correctly charged Asn-tRNA(Asn) or Gln-tRNA(Gln) through the transamidation of misacylated Asp-tRNA(Asn) or Glu-tRNA(Gln) in organisms which lack either or both of asparaginyl-tRNA or glutaminyl-tRNA synthetases. The reaction takes place in the presence of glutamine and ATP through an activated phospho-Asp-tRNA(Asn) or phospho-Glu-tRNA(Gln). The polypeptide is Aspartyl/glutamyl-tRNA(Asn/Gln) amidotransferase subunit C (Bordetella pertussis (strain Tohama I / ATCC BAA-589 / NCTC 13251)).